A 108-amino-acid polypeptide reads, in one-letter code: Evasin P1156 (108 aa).

A signal peptide spans 1 to 28 (MEVKTYAFLQIAVFIFLGMQIFASLTDA). Intrachain disulfides connect cysteine 41–cysteine 63, cysteine 45–cysteine 65, and cysteine 56–cysteine 76. N-linked (GlcNAc...) asparagine glycosylation is present at asparagine 44. The disordered stretch occupies residues 89–108 (NPSDSEIEAAKPKRSDTLSH). Residues 96 to 108 (EAAKPKRSDTLSH) show a composition bias toward basic and acidic residues.

The protein localises to the secreted. Its function is as follows. Salivary chemokine-binding protein which has chemokine-neutralizing activity and binds to host chemokines CXCL1, CXCL2, CXCL3, CXCL5, CXCL6 and CXCL8. The polypeptide is Evasin P1156 (Ixodes ricinus (Common tick)).